The primary structure comprises 212 residues: Protein-L-isoaspartate O-methyltransferase (212 aa).

Residue S56 is part of the active site.

The protein belongs to the methyltransferase superfamily. L-isoaspartyl/D-aspartyl protein methyltransferase family.

Its subcellular location is the cytoplasm. The enzyme catalyses [protein]-L-isoaspartate + S-adenosyl-L-methionine = [protein]-L-isoaspartate alpha-methyl ester + S-adenosyl-L-homocysteine. In terms of biological role, catalyzes the methyl esterification of L-isoaspartyl residues in peptides and proteins that result from spontaneous decomposition of normal L-aspartyl and L-asparaginyl residues. It plays a role in the repair and/or degradation of damaged proteins. The chain is Protein-L-isoaspartate O-methyltransferase from Myxococcus xanthus (strain DK1622).